A 348-amino-acid chain; its full sequence is GTP 3',8-cyclase (348 aa).

Residues 24-248 form the Radical SAM core domain; sequence PFGRAVTYLR…TDIDYQTGGP (225 aa). Arg-33 is a GTP binding site. [4Fe-4S] cluster is bound by residues Cys-40 and Cys-44. Position 46 (Tyr-46) interacts with S-adenosyl-L-methionine. Cys-47 is a binding site for [4Fe-4S] cluster. Arg-82 is a binding site for GTP. Gly-86 provides a ligand contact to S-adenosyl-L-methionine. Thr-115 provides a ligand contact to GTP. Ser-139 is an S-adenosyl-L-methionine binding site. Lys-175 is a binding site for GTP. Met-209 is an S-adenosyl-L-methionine binding site. [4Fe-4S] cluster contacts are provided by Cys-272 and Cys-275. Residue 277–279 coordinates GTP; that stretch reads RVR. Residue Cys-289 coordinates [4Fe-4S] cluster.

It belongs to the radical SAM superfamily. MoaA family. In terms of assembly, monomer and homodimer. The cofactor is [4Fe-4S] cluster.

The enzyme catalyses GTP + AH2 + S-adenosyl-L-methionine = (8S)-3',8-cyclo-7,8-dihydroguanosine 5'-triphosphate + 5'-deoxyadenosine + L-methionine + A + H(+). Its pathway is cofactor biosynthesis; molybdopterin biosynthesis. In terms of biological role, catalyzes the cyclization of GTP to (8S)-3',8-cyclo-7,8-dihydroguanosine 5'-triphosphate. This Rhizobium etli (strain ATCC 51251 / DSM 11541 / JCM 21823 / NBRC 15573 / CFN 42) protein is GTP 3',8-cyclase.